We begin with the raw amino-acid sequence, 180 residues long: Probable RNA 2'-phosphotransferase (180 aa).

This sequence belongs to the KptA/TPT1 family.

In terms of biological role, removes the 2'-phosphate from RNA via an intermediate in which the phosphate is ADP-ribosylated by NAD followed by a presumed transesterification to release the RNA and generate ADP-ribose 1''-2''-cyclic phosphate (APPR&gt;P). May function as an ADP-ribosylase. This chain is Probable RNA 2'-phosphotransferase, found in Pectobacterium atrosepticum (strain SCRI 1043 / ATCC BAA-672) (Erwinia carotovora subsp. atroseptica).